Here is a 257-residue protein sequence, read N- to C-terminus: Spindlin-2C (257 aa).

The segment at 1 to 47 (MKTPHKKGAAKEQMGEGVGHHIGSTTIKKKKASQKRQRSRSSSRRSI) is disordered. Residues 27–43 (IKKKKASQKRQRSRSSS) are compositionally biased toward basic residues. 3 tudor-like domain regions span residues 48-97 (VGCR…LELH), 127-176 (IGKA…YQLL), and 208-253 (IGKH…YDLV). 2 histone H3K4me3 and H3R8me2a binding regions span residues E136 and 244 to 246 (DFH).

The protein belongs to the SPIN/STSY family. As to quaternary structure, interacts with C11orf84/SPINDOC.

It localises to the nucleus. In terms of biological role, may be involved in the regulation of cell cycle progression. Exhibits H3K4me3-binding activity. In Mus musculus (Mouse), this protein is Spindlin-2C (Spin2c).